The chain runs to 142 residues: Deoxyuridine 5'-triphosphate nucleotidohydrolase (142 aa).

Substrate-binding positions include 62-64, Asn-75, 79-81, and Lys-89; these read RSG and TID.

This sequence belongs to the dUTPase family. Mg(2+) is required as a cofactor.

The catalysed reaction is dUTP + H2O = dUMP + diphosphate + H(+). It functions in the pathway pyrimidine metabolism; dUMP biosynthesis; dUMP from dCTP (dUTP route): step 2/2. This enzyme is involved in nucleotide metabolism: it produces dUMP, the immediate precursor of thymidine nucleotides and it decreases the intracellular concentration of dUTP so that uracil cannot be incorporated into DNA. This Nautilia profundicola (strain ATCC BAA-1463 / DSM 18972 / AmH) protein is Deoxyuridine 5'-triphosphate nucleotidohydrolase.